A 716-amino-acid polypeptide reads, in one-letter code: 1,4-alpha-glucan branching enzyme GlgB (716 aa).

The active-site Nucleophile is D394. E447 (proton donor) is an active-site residue.

It belongs to the glycosyl hydrolase 13 family. GlgB subfamily. In terms of assembly, monomer.

It catalyses the reaction Transfers a segment of a (1-&gt;4)-alpha-D-glucan chain to a primary hydroxy group in a similar glucan chain.. It participates in glycan biosynthesis; glycogen biosynthesis. In terms of biological role, catalyzes the formation of the alpha-1,6-glucosidic linkages in glycogen by scission of a 1,4-alpha-linked oligosaccharide from growing alpha-1,4-glucan chains and the subsequent attachment of the oligosaccharide to the alpha-1,6 position. This is 1,4-alpha-glucan branching enzyme GlgB from Photobacterium profundum (strain SS9).